A 262-amino-acid chain; its full sequence is MSDNHRLDGKVALVTGAGRGIGAAIAVALGERGAKVVVNYAHSREAAEKVVEQIKANGTDAIAIQADVGDPEATAKLMAETVRHFGYLDIVSSNAGIVSFGHLKDVTPEEFDRVFRVNTRGQFFVAREAYRHMREGGRIILTSSNTACVKGVPKHAVYSGSKGAIDTFVRCMAIDCGDKKITVNAVAPGAIKTDMFLAVSREYIPNGETFTDEQVDECAAWLSPLNRVGLPVDVARVVSFLASDTAEWVSGKIIGVDGGAFR.

NADP(+) contacts are provided by Ile-21, Asp-67, Asn-94, and Arg-127. Catalysis depends on proton donor residues Ser-143 and Ser-144. Residues Tyr-158, Lys-162, Ile-191, and Thr-193 each contribute to the NADP(+) site. The active-site Proton acceptor is Tyr-158. Catalysis depends on Lys-162, which acts as the Lowers pKa of active site Tyr.

Belongs to the short-chain dehydrogenases/reductases (SDR) family.

The protein resides in the cytoplasm. The protein localises to the cytosol. It carries out the reaction (4S,8R)-2,13,16,20-tetrahydroxy-7,9-dioxapentacyclo[10.8.0.0(3,10).0(4,8).0(14,19)]icosa-1(12),2,5,10,13,16,19-heptaen-18-one + NADPH + H(+) = (4S,8R,16R)-2,13,16,20-tetrahydroxy-7,9-dioxapentacyclo[10.8.0.0(3,10).0(4,8).0(14,19)]icosa-1(12),2,5,10,13,19-hexaen-18-one + NADP(+). It participates in mycotoxin biosynthesis; aflatoxin biosynthesis. Its function is as follows. Cytochrome P450 monooxygenase; part of the gene cluster that mediates the biosynthesis of aflatoxins, a group of polyketide-derived furanocoumarins, and part of the most toxic and carcinogenic compounds among the known mycotoxins. The four major aflatoxins produced by A.parasiticus are aflatoxin B1 (AFB1), aflatoxin B2 (AFB2), aflatoxin G1 (AFG1) and aflatoxin G2 (AFG2). Within the aflatoxin pathway, with the cytochrome P450 monooxygenase aflN, the versicolorin reductase aflM, is involved in conversion of VERA to demethylsterigmatocystin (DMST). The biosynthesis of aflatoxins begins with the norsolorinic acid synthase aflC that combines a hexanoyl starter unit produced by the fatty acid synthase aflA/aflB and 7 malonyl-CoA extender units to synthesize the precursor NOR. The second step is the conversion of NOR to averantin and requires the norsolorinic acid ketoreductase aflD, which catalyzes the dehydration of norsolorinic acid to form (1'S)-averantin. The norsolorinic acid reductases aflE and aflF may also play a role in the conversion of NOR to AVN. The cytochrome P450 monooxygenase aflG then catalyzes the hydroxylation of AVN to 5'hydroxyaverantin (HAVN). The next step is performed by the 5'-hydroxyaverantin dehydrogenase aflH that transforms HAVN to 5'-oxoaverantin (OAVN) which is further converted to averufin (AVF) by aflK that plays a dual role in the pathway, as a 5'-oxoaverantin cyclase that mediates conversion of 5'-oxoaverantin, as well as a versicolorin B synthase in a later step in the pathway. The averufin oxidase aflI catalyzes the conversion of AVF to versiconal hemiacetal acetate (VHA). VHA is then the substrate for the versiconal hemiacetal acetate esterase aflJ to yield versiconal (VAL). Versicolorin B synthase aflK then converts VAL to versicolorin B (VERB) by closing the bisfuran ring of aflatoxin which is required for DNA-binding, thus giving to aflatoxin its activity as a mutagen. Then, the activity of the versicolorin B desaturase aflL leads to versicolorin A (VERA). A branch point starts from VERB since it can also be converted to dihydrodemethylsterigmatocystin (DMDHST), probably also by aflL, VERA being a precursor for aflatoxins B1 and G1, and DMDHST for aflatoxins B2 and G2. Next, the versicolorin reductase aflM and the cytochrome P450 monooxygenase aflN are involved in conversion of VERA to demethylsterigmatocystin (DMST). AflX and aflY seem also involved in this step, through probable aflX-mediated epoxide ring-opening step following versicolorin A oxidation and aflY-mediated Baeyer-Villiger oxidation required for the formation of the xanthone ring. The methyltransferase aflO then leads to the modification of DMST to sterigmatocystin (ST), and of DMDHST to dihydrosterigmatocystin (DHST). Both ST and DHST are then substrates of the O-methyltransferase aflP to yield O-methylsterigmatocystin (OMST) and dihydro-O-methylsterigmatocystin (DHOMST), respectively. Finally OMST is converted to aflatoxins B1 and G1, and DHOMST to aflatoxins B2 and G2, via the action of several enzymes including O-methylsterigmatocystin oxidoreductase aflQ, the cytochrome P450 monooxygenase aflU, but also the NADH-dependent flavin oxidoreductase nadA which is specifically required for the synthesis of AFG1. The polypeptide is Versicolorin reductase 1 (Aspergillus parasiticus (strain ATCC 56775 / NRRL 5862 / SRRC 143 / SU-1)).